We begin with the raw amino-acid sequence, 198 residues long: Recombination protein RecR (198 aa).

The C4-type zinc finger occupies 58–73 (CSVCGNFTDKDPCAIC). The region spanning 81–175 (NTICVVEHPK…KVTRIAHGIP (95 aa)) is the Toprim domain.

Belongs to the RecR family.

May play a role in DNA repair. It seems to be involved in an RecBC-independent recombinational process of DNA repair. It may act with RecF and RecO. The chain is Recombination protein RecR from Clostridium tetani (strain Massachusetts / E88).